The sequence spans 152 residues: Protein SprT-like (152 aa).

The SprT-like domain maps to 7–148; that stretch reads QRLVEEVSLQ…GKCKGKLILI (142 aa). His-67 serves as a coordination point for Zn(2+). Glu-68 is an active-site residue. His-71 provides a ligand contact to Zn(2+).

Belongs to the SprT family. Requires Zn(2+) as cofactor.

It localises to the cytoplasm. The chain is Protein SprT-like from Bacillus cereus (strain AH187).